The chain runs to 300 residues: UDP-N-acetylenolpyruvoylglucosamine reductase (300 aa).

The region spanning 28–193 (KTGGPADWLA…LDATFALKLG (166 aa)) is the FAD-binding PCMH-type domain. R172 is an active-site residue. The active-site Proton donor is S222. The active site involves E292.

The protein belongs to the MurB family. It depends on FAD as a cofactor.

It is found in the cytoplasm. It carries out the reaction UDP-N-acetyl-alpha-D-muramate + NADP(+) = UDP-N-acetyl-3-O-(1-carboxyvinyl)-alpha-D-glucosamine + NADPH + H(+). The protein operates within cell wall biogenesis; peptidoglycan biosynthesis. In terms of biological role, cell wall formation. The protein is UDP-N-acetylenolpyruvoylglucosamine reductase of Limosilactobacillus fermentum (strain NBRC 3956 / LMG 18251) (Lactobacillus fermentum).